Consider the following 305-residue polypeptide: Ribosomal RNA large subunit methyltransferase F (305 aa).

The protein belongs to the methyltransferase superfamily. METTL16/RlmF family.

It is found in the cytoplasm. The enzyme catalyses adenosine(1618) in 23S rRNA + S-adenosyl-L-methionine = N(6)-methyladenosine(1618) in 23S rRNA + S-adenosyl-L-homocysteine + H(+). Functionally, specifically methylates the adenine in position 1618 of 23S rRNA. In Enterobacter sp. (strain 638), this protein is Ribosomal RNA large subunit methyltransferase F.